The chain runs to 691 residues: tRNA-dihydrouridine(47) synthase [NAD(P)(+)]-like (691 aa).

Position 2 is an N-acetylserine (Ser-2). The tract at residues 55-94 is disordered; the sequence is PPPPSRSVKQNDAADVRAPQSGLVQEKKSKRQLKRERREQ. 2 consecutive C3H1-type zinc fingers follow at residues 94–125 and 138–163; these read QSTI…HDIE and QCPF…HRDI. The segment at 259 to 286 is disordered; sequence LETEEVRPMKKAKSEDQKNSKTGDVGGV. Residues 262–279 are compositionally biased toward basic and acidic residues; it reads EEVRPMKKAKSEDQKNSK. FMN-binding positions include 344–346 and Gln-398; that span reads PLT. Cys-429 serves as the catalytic Proton donor. Residues Lys-468, His-498, 531-533, and 556-557 contribute to the FMN site; these read NGD and AR.

This sequence belongs to the Dus family. Dus3 subfamily. FMN serves as cofactor.

It carries out the reaction 5,6-dihydrouridine(47) in tRNA + NAD(+) = uridine(47) in tRNA + NADH + H(+). It catalyses the reaction 5,6-dihydrouridine(47) in tRNA + NADP(+) = uridine(47) in tRNA + NADPH + H(+). The catalysed reaction is a 5,6-dihydrouridine in mRNA + NAD(+) = a uridine in mRNA + NADH + H(+). The enzyme catalyses a 5,6-dihydrouridine in mRNA + NADP(+) = a uridine in mRNA + NADPH + H(+). Its function is as follows. Catalyzes the synthesis of dihydrouridine, a modified base found in the D-loop of most tRNAs. Specifically modifies U47 in cytoplasmic tRNAs. Catalyzes the synthesis of dihydrouridine in some mRNAs, thereby affecting their translation. This chain is tRNA-dihydrouridine(47) synthase [NAD(P)(+)]-like, found in Arabidopsis thaliana (Mouse-ear cress).